Consider the following 270-residue polypeptide: Carboxy-terminal domain RNA polymerase II polypeptide A small phosphatase 2 (270 aa).

Residue Ser-5 is modified to Phosphoserine. In terms of domain architecture, FCP1 homology spans 96–254 (QDQGRICVVI…LNLIPVFEEL (159 aa)). The active-site 4-aspartylphosphate intermediate is Asp-106. Mg(2+)-binding residues include Asp-106, Asp-108, and Asn-217. Catalysis depends on Asp-108, which acts as the Proton donor.

In terms of assembly, monomer. Interacts with REST. Mg(2+) is required as a cofactor. In terms of tissue distribution, expression is restricted to non-neuronal tissues.

Its subcellular location is the nucleus. It catalyses the reaction O-phospho-L-seryl-[protein] + H2O = L-seryl-[protein] + phosphate. It carries out the reaction O-phospho-L-threonyl-[protein] + H2O = L-threonyl-[protein] + phosphate. In terms of biological role, preferentially catalyzes the dephosphorylation of 'Ser-5' within the tandem 7 residue repeats in the C-terminal domain (CTD) of the largest RNA polymerase II subunit POLR2A. Negatively regulates RNA polymerase II transcription, possibly by controlling the transition from initiation/capping to processive transcript elongation. Recruited by REST to neuronal genes that contain RE-1 elements, leading to neuronal gene silencing in non-neuronal cells. This chain is Carboxy-terminal domain RNA polymerase II polypeptide A small phosphatase 2 (Ctdsp2), found in Mus musculus (Mouse).